Reading from the N-terminus, the 498-residue chain is MAKYAAAIDQGTTSTRCMIFDHSGNVICYDQKEHEQIYPRPGWVEHSPDEIWERTQSVIRGALSKGGLSASDIVAVGITNQRETTVVWNRKTGRPVYNAIVWQDTRTDQICNELAADGGQDRFRPKVGLPLATYFSGPKIRWILDNVPGAREAAEAGDVVFGNIDTFLTWWLTGGPNGGVHVTDVTNASRTMLMNLETLDWDDEILGIMGIPRQMLPKIVPSSMVYGTATGELAGVPVAGILGDQQAAMVGQTCFDVGEAKNTYGTGSFMLLNTGTKLVPSKSGLLTTVCYKFGDQPAVYALEGSIAITGALVQWLRDNLGLITSSAEVEALANLVEDNGGIYFVPAFSGLFAPYWRSDARGVIVGLTRYVNKGHLARAVLEATAYQTREVLDAMEQDSGVKLTALKVDGGMVYNNTLMQFQADILGVPVIRPKVAETTSLGAAYAAGLAVGFWSNTDEMRANWGVDHTWTPQMDEATRERLYRGWKKAVTRTFDWVE.

An ADP-binding site is contributed by T12. Positions 12, 13, and 14 each coordinate ATP. A sn-glycerol 3-phosphate-binding site is contributed by T12. Residue R16 participates in ADP binding. R82, E83, Y134, and D244 together coordinate sn-glycerol 3-phosphate. Residues R82, E83, Y134, D244, and Q245 each coordinate glycerol. ADP is bound by residues T266 and G310. ATP is bound by residues T266, G310, Q314, and G411. ADP-binding residues include G411 and N415.

The protein belongs to the FGGY kinase family.

The enzyme catalyses glycerol + ATP = sn-glycerol 3-phosphate + ADP + H(+). It participates in polyol metabolism; glycerol degradation via glycerol kinase pathway; sn-glycerol 3-phosphate from glycerol: step 1/1. Its activity is regulated as follows. Inhibited by fructose 1,6-bisphosphate (FBP). Its function is as follows. Key enzyme in the regulation of glycerol uptake and metabolism. Catalyzes the phosphorylation of glycerol to yield sn-glycerol 3-phosphate. This is Glycerol kinase from Chloroflexus aurantiacus (strain ATCC 29364 / DSM 637 / Y-400-fl).